The following is a 126-amino-acid chain: Aspartate 1-decarboxylase (126 aa).

The active-site Schiff-base intermediate with substrate; via pyruvic acid is the Ser25. The residue at position 25 (Ser25) is a Pyruvic acid (Ser). Residue Thr57 coordinates substrate. The active-site Proton donor is the Tyr58. 73–75 (GGA) is a binding site for substrate.

Belongs to the PanD family. Heterooctamer of four alpha and four beta subunits. Pyruvate is required as a cofactor. Post-translationally, is synthesized initially as an inactive proenzyme, which is activated by self-cleavage at a specific serine bond to produce a beta-subunit with a hydroxyl group at its C-terminus and an alpha-subunit with a pyruvoyl group at its N-terminus.

Its subcellular location is the cytoplasm. The enzyme catalyses L-aspartate + H(+) = beta-alanine + CO2. It participates in cofactor biosynthesis; (R)-pantothenate biosynthesis; beta-alanine from L-aspartate: step 1/1. Catalyzes the pyruvoyl-dependent decarboxylation of aspartate to produce beta-alanine. The sequence is that of Aspartate 1-decarboxylase from Xylella fastidiosa (strain Temecula1 / ATCC 700964).